The following is a 118-amino-acid chain: Lutropin subunit beta (118 aa).

6 disulfides stabilise this stretch: C9-C57, C23-C72, C26-C110, C34-C88, C38-C90, and C93-C100. N-linked (GlcNAc...) asparagine glycosylation is present at N13.

Belongs to the glycoprotein hormones subunit beta family. As to quaternary structure, heterodimer of a common alpha chain and a unique beta chain which confers biological specificity to thyrotropin, lutropin, follitropin and gonadotropin.

Its subcellular location is the secreted. Its function is as follows. Promotes spermatogenesis and ovulation by stimulating the testes and ovaries to synthesize steroids. The protein is Lutropin subunit beta (LHB) of Balaenoptera acutorostrata (Common minke whale).